We begin with the raw amino-acid sequence, 172 residues long: MERAAKKEAVESLNGLFQTTSVAIVAHYSGLTVAQMQKLRQQMKQAGASVKVSKNRLAKIALEGTDVAAIGPLLKGPTVIATSSDPVAAPKVAVEFAKANEKFVILGGSMGTTVLNVDGVKALASLPSLDELRAKLVGLVQAPATKIAQVTTAPAAKLARVVQAYASKSEAA.

It belongs to the universal ribosomal protein uL10 family. Part of the ribosomal stalk of the 50S ribosomal subunit. The N-terminus interacts with L11 and the large rRNA to form the base of the stalk. The C-terminus forms an elongated spine to which L12 dimers bind in a sequential fashion forming a multimeric L10(L12)X complex.

Functionally, forms part of the ribosomal stalk, playing a central role in the interaction of the ribosome with GTP-bound translation factors. The chain is Large ribosomal subunit protein uL10 from Rhodopseudomonas palustris (strain TIE-1).